Reading from the N-terminus, the 292-residue chain is Probable septum site-determining protein MinC (292 aa).

Residues 112 to 188 (DTAPPNDVAT…PQSSSALVIT (77 aa)) form a disordered region. The span at 128-137 (EATAEAAAKA) shows a compositional bias: low complexity. Positions 140–150 (QDDEAYGEQAD) are enriched in acidic residues. Over residues 171-185 (ANRPTATPPQSSSAL) the composition is skewed to polar residues.

Belongs to the MinC family. Interacts with MinD and FtsZ.

Cell division inhibitor that blocks the formation of polar Z ring septums. Rapidly oscillates between the poles of the cell to destabilize FtsZ filaments that have formed before they mature into polar Z rings. Prevents FtsZ polymerization. In Bordetella bronchiseptica (strain ATCC BAA-588 / NCTC 13252 / RB50) (Alcaligenes bronchisepticus), this protein is Probable septum site-determining protein MinC.